We begin with the raw amino-acid sequence, 124 residues long: Fluoride-specific ion channel FluC (124 aa).

4 helical membrane-spanning segments follow: residues 4–24 (LLLV…ISIF), 35–55 (FGTL…YALG), 60–80 (ISPE…TTFS), and 102–122 (VVLN…LVFS). 2 residues coordinate Na(+): glycine 74 and threonine 77.

The protein belongs to the fluoride channel Fluc/FEX (TC 1.A.43) family.

It localises to the cell inner membrane. The catalysed reaction is fluoride(in) = fluoride(out). Na(+) is not transported, but it plays an essential structural role and its presence is essential for fluoride channel function. Functionally, fluoride-specific ion channel. Important for reducing fluoride concentration in the cell, thus reducing its toxicity. This Shewanella baltica (strain OS223) protein is Fluoride-specific ion channel FluC.